Here is a 342-residue protein sequence, read N- to C-terminus: Anthranilate phosphoribosyltransferase (342 aa).

5-phospho-alpha-D-ribose 1-diphosphate contacts are provided by residues G83, 86-87 (GD), T91, 93-96 (NVST), 111-119 (KHGNRSVSG), and S123. G83 provides a ligand contact to anthranilate. S95 is a binding site for Mg(2+). N114 contributes to the anthranilate binding site. Anthranilate is bound at residue R169. Residues D228 and E229 each contribute to the Mg(2+) site.

This sequence belongs to the anthranilate phosphoribosyltransferase family. Homodimer. Mg(2+) is required as a cofactor.

It carries out the reaction N-(5-phospho-beta-D-ribosyl)anthranilate + diphosphate = 5-phospho-alpha-D-ribose 1-diphosphate + anthranilate. It functions in the pathway amino-acid biosynthesis; L-tryptophan biosynthesis; L-tryptophan from chorismate: step 2/5. Its function is as follows. Catalyzes the transfer of the phosphoribosyl group of 5-phosphorylribose-1-pyrophosphate (PRPP) to anthranilate to yield N-(5'-phosphoribosyl)-anthranilate (PRA). The sequence is that of Anthranilate phosphoribosyltransferase from Halorhodospira halophila (strain DSM 244 / SL1) (Ectothiorhodospira halophila (strain DSM 244 / SL1)).